Consider the following 1088-residue polypeptide: DNA polymerase II large subunit (1088 aa).

This sequence belongs to the archaeal DNA polymerase II family. As to quaternary structure, heterodimer of a large subunit and a small subunit.

The enzyme catalyses DNA(n) + a 2'-deoxyribonucleoside 5'-triphosphate = DNA(n+1) + diphosphate. It catalyses the reaction Exonucleolytic cleavage in the 3'- to 5'-direction to yield nucleoside 5'-phosphates.. Functionally, possesses two activities: a DNA synthesis (polymerase) and an exonucleolytic activity that degrades single-stranded DNA in the 3'- to 5'-direction. Has a template-primer preference which is characteristic of a replicative DNA polymerase. This Thermoplasma volcanium (strain ATCC 51530 / DSM 4299 / JCM 9571 / NBRC 15438 / GSS1) protein is DNA polymerase II large subunit (polC).